Consider the following 941-residue polypeptide: Glycine dehydrogenase (decarboxylating) (941 aa).

Residue Lys692 is modified to N6-(pyridoxal phosphate)lysine.

Belongs to the GcvP family. In terms of assembly, the glycine cleavage system is composed of four proteins: P, T, L and H. It depends on pyridoxal 5'-phosphate as a cofactor.

It catalyses the reaction N(6)-[(R)-lipoyl]-L-lysyl-[glycine-cleavage complex H protein] + glycine + H(+) = N(6)-[(R)-S(8)-aminomethyldihydrolipoyl]-L-lysyl-[glycine-cleavage complex H protein] + CO2. In terms of biological role, the glycine cleavage system catalyzes the degradation of glycine. The P protein binds the alpha-amino group of glycine through its pyridoxal phosphate cofactor; CO(2) is released and the remaining methylamine moiety is then transferred to the lipoamide cofactor of the H protein. This is Glycine dehydrogenase (decarboxylating) from Mycolicibacterium paratuberculosis (strain ATCC BAA-968 / K-10) (Mycobacterium paratuberculosis).